The following is a 496-amino-acid chain: Probable malate:quinone oxidoreductase (496 aa).

The protein belongs to the MQO family. Requires FAD as cofactor.

It catalyses the reaction (S)-malate + a quinone = a quinol + oxaloacetate. The protein operates within carbohydrate metabolism; tricarboxylic acid cycle; oxaloacetate from (S)-malate (quinone route): step 1/1. This chain is Probable malate:quinone oxidoreductase, found in Flavobacterium psychrophilum (strain ATCC 49511 / DSM 21280 / CIP 103535 / JIP02/86).